Here is a 1272-residue protein sequence, read N- to C-terminus: Vitamin B12-dependent ribonucleotide reductase (1272 aa).

Substrate-binding positions include S153, 198-199, G230, 474-478, and 675-679; these read AC, NPCSE, and PTGTI. C199 and C487 are oxidised to a cystine. The active-site Proton acceptor is the N474. C476 serves as the catalytic Cysteine radical intermediate. E478 functions as the Proton acceptor in the catalytic mechanism. The disordered stretch occupies residues 1120-1147; that stretch reads TLVSSNEGDRAASEPKGSATAAPARGSA.

This sequence belongs to the ribonucleoside diphosphate reductase class-2 family. Adenosylcob(III)alamin serves as cofactor.

The enzyme catalyses a 2'-deoxyribonucleoside 5'-diphosphate + [thioredoxin]-disulfide + H2O = a ribonucleoside 5'-diphosphate + [thioredoxin]-dithiol. Functionally, catalyzes the reduction of ribonucleotides to deoxyribonucleotides. May function to provide a pool of deoxyribonucleotide precursors for DNA repair during oxygen limitation and/or for immediate growth after restoration of oxygen. This is Vitamin B12-dependent ribonucleotide reductase (nrdJ) from Agrobacterium fabrum (strain C58 / ATCC 33970) (Agrobacterium tumefaciens (strain C58)).